We begin with the raw amino-acid sequence, 86 residues long: MIOREX complex component 7 (86 aa).

Associates with the mitochondrial ribosome.

It localises to the mitochondrion. Its function is as follows. Component of MIOREX complexes, large expressome-like assemblies of ribosomes with factors involved in all the steps of post-transcriptional gene expression. The sequence is that of MIOREX complex component 7 from Saccharomyces cerevisiae (strain ATCC 204508 / S288c) (Baker's yeast).